The following is a 636-amino-acid chain: Transcriptional repressor CTCFL (636 aa).

3 disordered regions span residues 17–38 (KEQK…VQRV), 160–195 (ENPE…DKRE), and 222–257 (LEEQ…PQSF). Positions 160–170 (ENPELTPDLDE) are enriched in acidic residues. A compositionally biased stretch (basic residues) spans 242-251 (AKPKRRRQTK). 11 consecutive C2H2-type zinc fingers follow at residues 257–279 (FQCD…IKIH), 285–307 (HLCH…VNTH), 313–336 (HKCR…RYKH), 342–364 (FKCS…IRSH), 370–392 (FQCC…MRTH), 398–421 (YECP…AQKH), 428–451 (YECP…RNLH), 458–480 (MKCR…QRTH), 486–508 (FKCK…MRMH), 514–537 (FSCL…RKYH), and 546–572 (HLCL…DPEH). The tract at residues 562-624 (QRHRKKCDPE…AAGSQSPDHG (63 aa)) is disordered. The span at 568 to 583 (CDPEHETLAPNKDRRP) shows a compositional bias: basic and acidic residues.

Belongs to the CTCF zinc-finger protein family. Interacts with histones, PRMT7 and SETD1A. Interacts (via N-terminus) with BAG6/BAT3. As to expression, testis-specific.

It localises to the cytoplasm. Its subcellular location is the nucleus. In terms of biological role, testis-specific DNA binding protein responsible for insulator function, nuclear architecture and transcriptional control, which probably acts by recruiting epigenetic chromatin modifiers. Plays a key role in gene imprinting in male germline, by participating in the establishment of differential methylation at the IGF2/H19 imprinted control region (ICR). Directly binds the unmethylated H19 ICR and recruits the PRMT7 methyltransferase, leading to methylate histone H4 'Arg-3' to form H4R3sme2. This probably leads to recruit de novo DNA methyltransferases at these sites. Seems to act as tumor suppressor. In association with DNMT1 and DNMT3B, involved in activation of BAG1 gene expression by binding to its promoter. Required for dimethylation of H3 lysine 4 (H3K4me2) of MYC and BRCA1 promoters. In Mus musculus (Mouse), this protein is Transcriptional repressor CTCFL (Ctcfl).